Reading from the N-terminus, the 354-residue chain is Thiamine thiazole synthase 2, chloroplastic (354 aa).

Residues 1 to 44 constitute a chloroplast transit peptide; it reads MATTAASSLLKSSFAGSRLPSATRTTTPSSVAVATPRAGGGPIR. Positions 17–49 are disordered; that stretch reads SRLPSATRTTTPSSVAVATPRAGGGPIRASISS. Over residues 20-32 the composition is skewed to polar residues; the sequence is PSATRTTTPSSVA. Residues alanine 97, 117–118, glycine 125, and valine 190 each bind substrate; that span reads EQ. Cysteine 219 carries the post-translational modification 2,3-didehydroalanine (Cys). Residues aspartate 221, histidine 236, methionine 288, and 298–300 contribute to the substrate site; that span reads RMG.

The protein belongs to the THI4 family. In terms of assembly, homooctamer. Fe cation serves as cofactor. During the catalytic reaction, a sulfide is transferred from Cys-219 to a reaction intermediate, generating a dehydroalanine residue. In terms of tissue distribution, highest expression in developing embryos and green leaves and a very low level expression seen in endosperm, roots, etiolated shoots and immature ears.

Its subcellular location is the plastid. It localises to the chloroplast. It carries out the reaction [ADP-thiazole synthase]-L-cysteine + glycine + NAD(+) = [ADP-thiazole synthase]-dehydroalanine + ADP-5-ethyl-4-methylthiazole-2-carboxylate + nicotinamide + 3 H2O + 2 H(+). Its function is as follows. Involved in biosynthesis of the thiamine precursor thiazole. Catalyzes the conversion of NAD and glycine to adenosine diphosphate 5-(2-hydroxyethyl)-4-methylthiazole-2-carboxylic acid (ADT), an adenylated thiazole intermediate. The reaction includes an iron-dependent sulfide transfer from a conserved cysteine residue of the protein to a thiazole intermediate. The enzyme can only undergo a single turnover, which suggests it is a suicide enzyme. May have additional roles in adaptation to various stress conditions and in DNA damage tolerance. The chain is Thiamine thiazole synthase 2, chloroplastic from Zea mays (Maize).